The primary structure comprises 82 residues: Small ribosomal subunit protein uS17 (82 aa).

This sequence belongs to the universal ribosomal protein uS17 family. In terms of assembly, part of the 30S ribosomal subunit.

In terms of biological role, one of the primary rRNA binding proteins, it binds specifically to the 5'-end of 16S ribosomal RNA. This Shewanella denitrificans (strain OS217 / ATCC BAA-1090 / DSM 15013) protein is Small ribosomal subunit protein uS17.